We begin with the raw amino-acid sequence, 53 residues long: Bowman-Birk type proteinase inhibitor II-4 (53 aa).

4 disulfide bridges follow: Cys8–Cys23, Cys13–Cys21, Cys30–Cys37, and Cys34–Cys49.

It belongs to the Bowman-Birk serine protease inhibitor family.

This is Bowman-Birk type proteinase inhibitor II-4 from Triticum aestivum (Wheat).